Consider the following 187-residue polypeptide: Putative adenylate kinase (187 aa).

Gly10, Gly12, Lys13, Thr14, and Val15 together coordinate ATP. Residues 30 to 53 (SLSQFVIENKLYTEYDELRQSYII) form an NMP region. Residues 103 to 113 (GRGWADIKVAE) form an LID region. Arg104 contributes to the ATP binding site.

It belongs to the adenylate kinase family. AK6 subfamily. In terms of assembly, interacts with uS11. Not a structural component of 40S pre-ribosomes, but transiently interacts with them by binding to uS11.

The enzyme catalyses AMP + ATP = 2 ADP. It carries out the reaction ATP + H2O = ADP + phosphate + H(+). Its function is as follows. Broad-specificity nucleoside monophosphate (NMP) kinase that catalyzes the reversible transfer of the terminal phosphate group between nucleoside triphosphates and monophosphates. Also has ATPase activity. Involved in the late maturation steps of the 30S ribosomal particles, specifically 16S rRNA maturation. While NMP activity is not required for ribosome maturation, ATPase activity is. Associates transiently with small ribosomal subunit protein uS11. ATP hydrolysis breaks the interaction with uS11. May temporarily remove uS11 from the ribosome to enable a conformational change of the ribosomal RNA that is needed for the final maturation step of the small ribosomal subunit. The polypeptide is Putative adenylate kinase (Saccharolobus islandicus (strain M.16.4 / Kamchatka #3) (Sulfolobus islandicus)).